A 284-amino-acid chain; its full sequence is 4-diphosphocytidyl-2-C-methyl-D-erythritol kinase (284 aa).

Residue Lys14 is part of the active site. Residue Pro98–Ser108 coordinates ATP. The active site involves Asp140.

Belongs to the GHMP kinase family. IspE subfamily.

It catalyses the reaction 4-CDP-2-C-methyl-D-erythritol + ATP = 4-CDP-2-C-methyl-D-erythritol 2-phosphate + ADP + H(+). The protein operates within isoprenoid biosynthesis; isopentenyl diphosphate biosynthesis via DXP pathway; isopentenyl diphosphate from 1-deoxy-D-xylulose 5-phosphate: step 3/6. Its function is as follows. Catalyzes the phosphorylation of the position 2 hydroxy group of 4-diphosphocytidyl-2C-methyl-D-erythritol. The protein is 4-diphosphocytidyl-2-C-methyl-D-erythritol kinase of Shewanella baltica (strain OS223).